The chain runs to 170 residues: Zinc finger matrin-type protein 5 (170 aa).

The C3H1-type zinc-finger motif lies at 51-79 (EQNKRPCRKFLLTGQCDFGSNCRFSHMSE). The segment at 150-170 (PPSLRAPPPGGWPLQPSVQWG) is disordered.

Component of the U11/U12 snRNPs that are part of the U12-type spliceosome.

It localises to the nucleus. The protein is Zinc finger matrin-type protein 5 (ZMAT5) of Bos taurus (Bovine).